The primary structure comprises 116 residues: Ferredoxin-thioredoxin reductase, catalytic chain (116 aa).

C57 lines the [4Fe-4S] cluster pocket. The active-site Nucleophile is the C59. A disulfide bridge connects residues C59 and C89. [4Fe-4S] cluster contacts are provided by C76, C78, and C87.

This sequence belongs to the ferredoxin thioredoxin reductase beta subunit family. Heterodimer of subunit A (variable subunit) and subunit B (catalytic subunit). Heterodimeric FTR forms a complex with ferredoxin and thioredoxin. The cofactor is [4Fe-4S] cluster.

The protein resides in the plastid. Its subcellular location is the chloroplast. It carries out the reaction [thioredoxin]-disulfide + 2 reduced [2Fe-2S]-[ferredoxin] + 2 H(+) = [thioredoxin]-dithiol + 2 oxidized [2Fe-2S]-[ferredoxin]. Its function is as follows. Catalytic subunit of the ferredoxin-thioredoxin reductase (FTR), which catalyzes the two-electron reduction of thioredoxins by the electrons provided by reduced ferredoxin. This Pyropia yezoensis (Susabi-nori) protein is Ferredoxin-thioredoxin reductase, catalytic chain (ftrB).